Reading from the N-terminus, the 369-residue chain is MMDKDSFILPKDFPELRNDTFLRAARGEEIEHIPVWCMRQAGRYLPEFRESRAGKDFFETCRSPEACCELTLQPLRRFPFDAAIIFSDILVVPQAMGMEVQMCPGKGPTFPEPLKEPEDLQRLKTQVDVYSELDYVFKAITLTRHKIEGKVPLIGFTGAPWTLMSYMIEGGGSATHSKAKRWLYRYPEASHKLLSQLTDVIVEYLLGQVKAGAQALQVFESHTGCLGPVEFKEFSLPYLRDIARRVKDKIKESGLDNVPMIVFAKDGHYGLEDLSESAYEVVGLDWTIDPRSARVRTGGKVSLQGNMDPCALYGTKESISEIVRRMLEGFGTKGYIANLGHGLYPDMDPENVGAFVEAVHNHSRQLLKR.

Residues Arg39, Ala41, Arg43, Arg52, Asp88, Tyr166, Ser221, and His341 each coordinate coproporphyrinogen I. Coproporphyrinogen III contacts are provided by Arg39, Ala41, and Arg43. Coproporphyrinogen III is bound by residues Asp88, Tyr166, Ser221, and His341.

This sequence belongs to the uroporphyrinogen decarboxylase family. As to quaternary structure, homodimer.

The protein resides in the cytoplasm. The protein localises to the cytosol. It catalyses the reaction uroporphyrinogen III + 4 H(+) = coproporphyrinogen III + 4 CO2. The catalysed reaction is uroporphyrinogen I + 4 H(+) = coproporphyrinogen I + 4 CO2. Its pathway is porphyrin-containing compound metabolism; protoporphyrin-IX biosynthesis; coproporphyrinogen-III from 5-aminolevulinate: step 4/4. Functionally, catalyzes the sequential decarboxylation of the four acetate side chains of uroporphyrinogen to form coproporphyrinogen and participates in the fifth step in the heme biosynthetic pathway. Isomer I or isomer III of uroporphyrinogen may serve as substrate, but only coproporphyrinogen III can ultimately be converted to heme. In vitro also decarboxylates pentacarboxylate porphyrinogen I. The sequence is that of Uroporphyrinogen decarboxylase from Danio rerio (Zebrafish).